A 662-amino-acid polypeptide reads, in one-letter code: DNA topoisomerase 4 subunit B (662 aa).

Residues Tyr20, Asn60, Asp87, 129–135 (GLHGVGI), and Lys359 each bind ATP. Residues 439 to 553 (TELFIVEGDS…EGHLYLAKPP (115 aa)) form the Toprim domain. 3 residues coordinate Mg(2+): Glu445, Asp518, and Asp520.

Belongs to the type II topoisomerase family. ParE type 1 subfamily. In terms of assembly, heterotetramer composed of ParC and ParE. The cofactor is Mg(2+). Requires Mn(2+) as cofactor. Ca(2+) serves as cofactor.

It catalyses the reaction ATP-dependent breakage, passage and rejoining of double-stranded DNA.. Its function is as follows. Topoisomerase IV is essential for chromosome segregation. It relaxes supercoiled DNA. Performs the decatenation events required during the replication of a circular DNA molecule. This is DNA topoisomerase 4 subunit B from Rickettsia felis (strain ATCC VR-1525 / URRWXCal2) (Rickettsia azadi).